The primary structure comprises 254 residues: Thiazole synthase (254 aa).

Lysine 95 (schiff-base intermediate with DXP) is an active-site residue. Residues glycine 156, 182–183 (AG), and 204–205 (NT) each bind 1-deoxy-D-xylulose 5-phosphate.

The protein belongs to the ThiG family. As to quaternary structure, homotetramer. Forms heterodimers with either ThiH or ThiS.

It localises to the cytoplasm. It catalyses the reaction [ThiS sulfur-carrier protein]-C-terminal-Gly-aminoethanethioate + 2-iminoacetate + 1-deoxy-D-xylulose 5-phosphate = [ThiS sulfur-carrier protein]-C-terminal Gly-Gly + 2-[(2R,5Z)-2-carboxy-4-methylthiazol-5(2H)-ylidene]ethyl phosphate + 2 H2O + H(+). It participates in cofactor biosynthesis; thiamine diphosphate biosynthesis. Catalyzes the rearrangement of 1-deoxy-D-xylulose 5-phosphate (DXP) to produce the thiazole phosphate moiety of thiamine. Sulfur is provided by the thiocarboxylate moiety of the carrier protein ThiS. In vitro, sulfur can be provided by H(2)S. This chain is Thiazole synthase, found in Shewanella oneidensis (strain ATCC 700550 / JCM 31522 / CIP 106686 / LMG 19005 / NCIMB 14063 / MR-1).